The chain runs to 156 residues: Protein eva-1 homolog A (156 aa).

A helical transmembrane segment spans residues 40–60 (ALYFVSGVCIGLFLTLAALVM). A disordered region spans residues 79 to 100 (DRECSDSSDSEDGSEDTASDLS). Residues 84–96 (DSSDSEDGSEDTA) are compositionally biased toward acidic residues. Thr-110 bears the Phosphothreonine mark. Ser-118 carries the phosphoserine modification.

This sequence belongs to the EVA1 family.

It localises to the endoplasmic reticulum membrane. It is found in the lysosome membrane. Its function is as follows. Acts as a regulator of programmed cell death, mediating both autophagy and apoptosis. The polypeptide is Protein eva-1 homolog A (Eva1a) (Mus musculus (Mouse)).